The following is an 853-amino-acid chain: DNA mismatch repair protein MutS (853 aa).

Residue 614-621 coordinates ATP; sequence GPNMGGKS.

This sequence belongs to the DNA mismatch repair MutS family.

Functionally, this protein is involved in the repair of mismatches in DNA. It is possible that it carries out the mismatch recognition step. This protein has a weak ATPase activity. The protein is DNA mismatch repair protein MutS of Shigella flexneri serotype 5b (strain 8401).